A 548-amino-acid polypeptide reads, in one-letter code: Aromatic ammonia-lyase (548 aa).

The Proton donor/acceptor role is filled by Y55. Positions A144 to G146 form a cross-link, 5-imidazolinone (Ala-Gly). S145 carries the post-translational modification 2,3-didehydroalanine (Ser). 7 residues coordinate (E)-cinnamate: N200, Q288, R294, N324, K396, E425, and N428.

The protein belongs to the PAL/histidase family. In terms of assembly, homotetramer. Contains an active site 4-methylidene-imidazol-5-one (MIO), which is formed autocatalytically by cyclization and dehydration of residues Ala-Ser-Gly.

The enzyme catalyses L-phenylalanine = (E)-cinnamate + NH4(+). It carries out the reaction L-tyrosine = (E)-4-coumarate + NH4(+). It catalyses the reaction 3,4-dimethoxy-L-phenylalanine = 3,4-dimethoxy-(E)-cinnamate + NH4(+). It participates in phenylpropanoid metabolism; trans-cinnamate biosynthesis; trans-cinnamate from L-phenylalanine: step 1/1. In terms of biological role, aromatic ammonia-lyase (AAL) that shows reduced activity to catalyze the non-oxidative ammonia elimination from the canonical AAL substrates L-Phe and L-Tyr, contrasted by its pronounced efficiency towards substrates with electron-donor aromatic substituents such as 3,4-dimethoxy-L-phenylalanine. Is also able to catalyze the reverse reaction in vitro, i.e. the ammonia addition reaction to cinnamate derivatives, producing enantiopure phenylalanine derivatives. Shows no activity with L-His. The protein is Aromatic ammonia-lyase of Loktanella atrilutea.